Consider the following 904-residue polypeptide: Alanine--tRNA ligase (904 aa).

Zn(2+) contacts are provided by His-584, His-588, Cys-687, and His-691.

This sequence belongs to the class-II aminoacyl-tRNA synthetase family. Zn(2+) is required as a cofactor.

Its subcellular location is the cytoplasm. It carries out the reaction tRNA(Ala) + L-alanine + ATP = L-alanyl-tRNA(Ala) + AMP + diphosphate. Catalyzes the attachment of alanine to tRNA(Ala) in a two-step reaction: alanine is first activated by ATP to form Ala-AMP and then transferred to the acceptor end of tRNA(Ala). Also edits incorrectly charged Ser-tRNA(Ala) and Gly-tRNA(Ala) via its editing domain. In Mycobacterium bovis (strain ATCC BAA-935 / AF2122/97), this protein is Alanine--tRNA ligase.